The primary structure comprises 305 residues: Elongation factor Ts (305 aa).

Residues 79–82 are involved in Mg(2+) ion dislocation from EF-Tu; it reads TDFV.

Belongs to the EF-Ts family.

It localises to the cytoplasm. In terms of biological role, associates with the EF-Tu.GDP complex and induces the exchange of GDP to GTP. It remains bound to the aminoacyl-tRNA.EF-Tu.GTP complex up to the GTP hydrolysis stage on the ribosome. This chain is Elongation factor Ts, found in Brucella anthropi (strain ATCC 49188 / DSM 6882 / CCUG 24695 / JCM 21032 / LMG 3331 / NBRC 15819 / NCTC 12168 / Alc 37) (Ochrobactrum anthropi).